Consider the following 579-residue polypeptide: V-type ATP synthase alpha chain (579 aa).

227–234 provides a ligand contact to ATP; sequence GGFGTGKT.

It belongs to the ATPase alpha/beta chains family.

It carries out the reaction ATP + H2O + 4 H(+)(in) = ADP + phosphate + 5 H(+)(out). Its function is as follows. Produces ATP from ADP in the presence of a proton gradient across the membrane. The V-type alpha chain is a catalytic subunit. The protein is V-type ATP synthase alpha chain of Anaeromyxobacter sp. (strain K).